An 81-amino-acid chain; its full sequence is Large ribosomal subunit protein bL27 (81 aa).

Positions 1 to 11 (MATSKSGGSSK) are enriched in polar residues. Residues 1-23 (MATSKSGGSSKNGRDSISKRLGV) are disordered.

It belongs to the bacterial ribosomal protein bL27 family.

The sequence is that of Large ribosomal subunit protein bL27 from Borrelia garinii subsp. bavariensis (strain ATCC BAA-2496 / DSM 23469 / PBi) (Borreliella bavariensis).